A 342-amino-acid polypeptide reads, in one-letter code: Trans-3-hydroxy-L-proline dehydratase (342 aa).

Ser-90 functions as the Proton acceptor in the catalytic mechanism. Substrate contacts are provided by residues Gly-91–Ser-92, Asp-251, and Gly-256–Thr-257.

It belongs to the proline racemase family.

It carries out the reaction trans-3-hydroxy-L-proline = 1-pyrroline-2-carboxylate + H2O. Catalyzes the dehydration of trans-3-hydroxy-L-proline (t3LHyp) to Delta(1)-pyrroline-2-carboxylate (Pyr2C). Displays neither proline racemase activity nor 4-hydroxyproline 2-epimerase activity. This is Trans-3-hydroxy-L-proline dehydratase from Brucella suis biovar 1 (strain 1330).